The primary structure comprises 86 residues: MSVMLRRLVVLPVRFYQYCISPLFPPACRYVPTCSAYTAEAVMRHGVMRGLWLAARRILRCHPWCAGGHDPVPPVPPQRYPSAQEH.

Residues Ala66–His86 form a disordered region.

This sequence belongs to the UPF0161 family.

The protein resides in the cell inner membrane. In terms of biological role, could be involved in insertion of integral membrane proteins into the membrane. This chain is Putative membrane protein insertion efficiency factor, found in Nitratidesulfovibrio vulgaris (strain ATCC 29579 / DSM 644 / CCUG 34227 / NCIMB 8303 / VKM B-1760 / Hildenborough) (Desulfovibrio vulgaris).